The following is a 94-amino-acid chain: MDTKGILLVAVLTALLCLQSGDTLGASWHRPDKCCLGYQKRPLPQVLLSSWYPTSQLCSKPGVIFLTKRGRQVCADKSKDWVKKLMQQLPVTAR.

Residues 1–20 (MDTKGILLVAVLTALLCLQS) form the signal peptide. Cystine bridges form between cysteine 34–cysteine 58 and cysteine 35–cysteine 74.

Belongs to the intercrine beta (chemokine CC) family. As to quaternary structure, monomer. Interacts with human chemokine receptor CXCR4.

It localises to the secreted. In terms of biological role, blocks infection by several different human immunodeficiency virus type 1 (HIV-1) strains. This occurs because vMIP-II binds to a wide range of chemokine receptors. May form part of the response to host defenses contributing to virus-induced neoplasia and may have relevance to KSHV and HIV-I interactions. The protein is Viral macrophage inflammatory protein 2 (ORF K4) of Human herpesvirus 8 type P (isolate GK18) (HHV-8).